The primary structure comprises 275 residues: Ribosomal RNA small subunit methyltransferase A (275 aa).

The S-adenosyl-L-methionine site is built by Asn-19, Leu-21, Gly-46, Glu-71, Asp-94, and Asn-117.

Belongs to the class I-like SAM-binding methyltransferase superfamily. rRNA adenine N(6)-methyltransferase family. RsmA subfamily.

Its subcellular location is the cytoplasm. The catalysed reaction is adenosine(1518)/adenosine(1519) in 16S rRNA + 4 S-adenosyl-L-methionine = N(6)-dimethyladenosine(1518)/N(6)-dimethyladenosine(1519) in 16S rRNA + 4 S-adenosyl-L-homocysteine + 4 H(+). In terms of biological role, specifically dimethylates two adjacent adenosines (A1518 and A1519) in the loop of a conserved hairpin near the 3'-end of 16S rRNA in the 30S particle. May play a critical role in biogenesis of 30S subunits. The polypeptide is Ribosomal RNA small subunit methyltransferase A (Burkholderia mallei (strain NCTC 10247)).